A 1381-amino-acid chain; its full sequence is Protein HEG homolog 1 (1381 aa).

Positions 1–29 (MASPRASRWPPPLLLLLLPLLLLPPAAPG) are cleaved as a signal peptide. Positions 24 to 108 (PPAAPGTRDP…APRGGSADAA (85 aa)) are disordered. Over residues 25-37 (PAAPGTRDPPPSP) the composition is skewed to pro residues. At 30 to 1248 (TRDPPPSPAR…GLNCGNPYQL (1219 aa)) the chain is on the extracellular side. Positions 38–52 (ARRALSLAPLAGAGL) are enriched in low complexity. Residues 55–74 (QLERRPEREPPPTPPRERRG) show a composition bias toward basic and acidic residues. Thr-67 carries an O-linked (GalNAc...) threonine glycan. Residues 93–105 (RGPSGRAPRGGSA) show a composition bias toward low complexity. 4 N-linked (GlcNAc...) asparagine glycosylation sites follow: Asn-123, Asn-159, Asn-180, and Asn-314. Residues 301-316 (DLSSSSESTEKLNNST) are compositionally biased toward low complexity. Disordered regions lie at residues 301 to 325 (DLSSSSESTEKLNNSTGLQSSSVSQ) and 376 to 447 (PSAV…RSVA). Residues 424-444 (LASSSEVQNGSPMSQTETVSR) are compositionally biased toward polar residues. Asn-462, Asn-520, and Asn-610 each carry an N-linked (GlcNAc...) asparagine glycan. Residues 491–529 (STVQSGGSHTALGDRSYSESSSTSSSESLNSSAPRGERS) are disordered. A compositionally biased stretch (low complexity) spans 508–522 (SESSSTSSSESLNSS). 3 disordered regions span residues 612–680 (SSYD…PLPS), 706–757 (SDAS…PVTS), and 774–830 (QTAD…TLPA). The span at 620–648 (QPSTESPVLHTSNLPSYTPTINMPNTSVV) shows a compositional bias: polar residues. Low complexity-rich tracts occupy residues 657-680 (SDSSSSSSSSSSSSSSGPPLPLPS) and 706-748 (SDAS…PVLP). Polar residues-rich tracts occupy residues 774–784 (QTADLKSQSTP) and 792–809 (ESKSPSLVSLPTESTKAV). The segment covering 810 to 825 (TTNSPLPPSLTESSTE) has biased composition (low complexity). The 39-residue stretch at 985–1023 (SVNSCAVNPCLHNGECVADNTSRGYHCRCPPSWQGDDCS) folds into the EGF-like 1 domain. Cystine bridges form between Cys-989–Cys-1000, Cys-994–Cys-1011, Cys-1013–Cys-1022, Cys-1029–Cys-1040, Cys-1034–Cys-1049, and Cys-1051–Cys-1062. Positions 1025–1063 (DVNECLSNPCPSTAMCNNTQGSFICKCPVGYQLEKGICN) constitute an EGF-like 2; calcium-binding domain. N-linked (GlcNAc...) asparagine glycosylation occurs at Asn-1137. Residues 1249–1269 (ITVVIAAAGGGLLLILGIALI) form a helical membrane-spanning segment. Over 1270–1381 (VTCCRKNKND…SDESRRRDYF (112 aa)) the chain is Cytoplasmic. Ser-1359 bears the Phosphoserine mark.

As to quaternary structure, interacts with CCM2 and KRIT1; KRIT1 markedly facilitates interaction with CCM2.

The protein localises to the cell membrane. Its subcellular location is the cell junction. It localises to the secreted. Functionally, receptor component of the CCM signaling pathway which is a crucial regulator of heart and vessel formation and integrity. May act through the stabilization of endothelial cell junctions. The sequence is that of Protein HEG homolog 1 (HEG1) from Homo sapiens (Human).